Here is a 382-residue protein sequence, read N- to C-terminus: MADDKKTNEYTVEMDKLDHGNKNFEAPAPAVRPRGPPAAQLANNPILPVLAYCGSSILMTVMNKYVLSGTDFNLNFFLLCVQSIVCIVAIQTCKSSKLITYRDFNSDEAKKWFPITLLLIGMIYTGSKALQYLSIPVYTIFKNLTIILIAYGEVLWFGGSVTGMTLFSFGLMVLSSIIAAWADIKHAVESSGDATAKVSTLNAGYIWMLINCLCTSSYVLGMRKRIKLTNFKDFDTMFYNNLLSIPVLLVLTFLMEDWSSANIARNFPPADRNGILFAMILSGLSSVFISYTSAWCVRVTSSTTYSMVGALNKLPIALSGLIFFDAPVTFPSVSAIVVGFISGIVYAVAKIKQSAKPKTGVLPMSNPPVSASSQSMRDSLRS.

Over 1–40 the chain is Cytoplasmic; that stretch reads MADDKKTNEYTVEMDKLDHGNKNFEAPAPAVRPRGPPAAQ. A helical membrane pass occupies residues 41–61; it reads LANNPILPVLAYCGSSILMTV. The Lumenal portion of the chain corresponds to 62–71; sequence MNKYVLSGTD. The helical transmembrane segment at 72 to 92 threads the bilayer; the sequence is FNLNFFLLCVQSIVCIVAIQT. Topologically, residues 93-110 are cytoplasmic; that stretch reads CKSSKLITYRDFNSDEAK. Residues 111 to 127 traverse the membrane as a helical segment; the sequence is KWFPITLLLIGMIYTGS. Over 128 to 134 the chain is Lumenal; it reads KALQYLS. Residues 135–151 traverse the membrane as a helical segment; sequence IPVYTIFKNLTIILIAY. The Cytoplasmic portion of the chain corresponds to 152–160; that stretch reads GEVLWFGGS. Residues 161 to 182 traverse the membrane as a helical segment; that stretch reads VTGMTLFSFGLMVLSSIIAAWA. The Lumenal segment spans residues 183 to 200; the sequence is DIKHAVESSGDATAKVST. Residues 201–221 form a helical membrane-spanning segment; the sequence is LNAGYIWMLINCLCTSSYVLG. Over 222 to 233 the chain is Cytoplasmic; sequence MRKRIKLTNFKD. The chain crosses the membrane as a helical span at residues 234–254; the sequence is FDTMFYNNLLSIPVLLVLTFL. Residues 255–274 are Lumenal-facing; it reads MEDWSSANIARNFPPADRNG. Residues 275–295 traverse the membrane as a helical segment; sequence ILFAMILSGLSSVFISYTSAW. The Cytoplasmic portion of the chain corresponds to 296–303; sequence CVRVTSST. A helical membrane pass occupies residues 304–324; that stretch reads TYSMVGALNKLPIALSGLIFF. Over 325-327 the chain is Lumenal; that stretch reads DAP. The chain crosses the membrane as a helical span at residues 328 to 348; that stretch reads VTFPSVSAIVVGFISGIVYAV. At 349-382 the chain is on the cytoplasmic side; sequence AKIKQSAKPKTGVLPMSNPPVSASSQSMRDSLRS. A disordered region spans residues 358-382; the sequence is KTGVLPMSNPPVSASSQSMRDSLRS. Positions 367-382 are enriched in polar residues; the sequence is PPVSASSQSMRDSLRS.

This sequence belongs to the TPT transporter family. SLC35D subfamily. In terms of assembly, homooligomer.

Its subcellular location is the golgi apparatus membrane. The protein resides in the cytoplasmic vesicle membrane. It is found in the endoplasmic reticulum membrane. Its function is as follows. Involved in the import of GDP-mannose from the cytoplasm into the Golgi lumen. This is GDP-mannose transporter 1 (gmt1) from Neosartorya fischeri (strain ATCC 1020 / DSM 3700 / CBS 544.65 / FGSC A1164 / JCM 1740 / NRRL 181 / WB 181) (Aspergillus fischerianus).